The following is a 696-amino-acid chain: Serotransferrin (696 aa).

Transferrin-like domains are found at residues 6–332 (VRWC…NLRE) and 346–672 (VRWC…NLRK). Cystine bridges form between Cys9-Cys47 and Cys19-Cys38. Arg23 bears the Dimethylated arginine mark. A glycan (N-linked (GlcNAc...) asparagine) is linked at Asn25. Residues Asp62 and Tyr94 each contribute to the Fe(3+) site. 5 cysteine pairs are disulfide-bonded: Cys117–Cys198, Cys157–Cys173, Cys160–Cys181, Cys170–Cys183, and Cys231–Cys245. Hydrogencarbonate is bound by residues Thr119, Arg123, Ala125, and Gly126. Tyr192 lines the Fe(3+) pocket. His253 contacts Fe(3+). Disulfide bonds link Cys343–Cys605, Cys349–Cys381, Cys359–Cys372, Cys406–Cys682, Cys423–Cys646, Cys456–Cys532, Cys480–Cys673, Cys490–Cys504, Cys501–Cys515, Cys572–Cys586, and Cys624–Cys629. Residue Ser374 is modified to Phosphoserine. Fe(3+) is bound by residues Asp396 and Tyr431. Residues Thr458, Arg462, Ala464, and Gly465 each contribute to the hydrogencarbonate site. Asn497 is a glycosylation site (N-linked (GlcNAc...) asparagine). Fe(3+) is bound at residue Tyr526. His594 is a Fe(3+) binding site. Phosphoserine is present on Ser674.

This sequence belongs to the transferrin family. In terms of assembly, monomer. Part of a complex composed of SLC40A1/ferroportin, TF/transferrin and HEPH/hephaestin that transfers iron from cells to transferrin. Expressed by the liver and secreted in plasma.

The protein resides in the secreted. Functionally, transferrins are iron binding transport proteins which can bind two Fe(3+) ions in association with the binding of an anion, usually bicarbonate. It is responsible for the transport of iron from sites of absorption and heme degradation to those of storage and utilization. Serum transferrin may also have a further role in stimulating cell proliferation. The polypeptide is Serotransferrin (TF) (Sus scrofa (Pig)).